Consider the following 546-residue polypeptide: Glucose-6-phosphate isomerase (546 aa).

The Proton donor role is filled by E355. Catalysis depends on residues H386 and K510.

Belongs to the GPI family.

The protein resides in the cytoplasm. It catalyses the reaction alpha-D-glucose 6-phosphate = beta-D-fructose 6-phosphate. The protein operates within carbohydrate biosynthesis; gluconeogenesis. It functions in the pathway carbohydrate degradation; glycolysis; D-glyceraldehyde 3-phosphate and glycerone phosphate from D-glucose: step 2/4. In terms of biological role, catalyzes the reversible isomerization of glucose-6-phosphate to fructose-6-phosphate. The polypeptide is Glucose-6-phosphate isomerase (Buchnera aphidicola subsp. Cinara cedri (strain Cc)).